The chain runs to 144 residues: Bradykinin-potentiating and C-type natriuretic peptides isoform 2 (144 aa).

The N-terminal stretch at 1-23 (MVLSRLAASGLLLLALLALSVDG) is a signal peptide. Positions 24 to 30 (KPVQQWA) are excised as a propeptide. Pyrrolidone carboxylic acid is present on Q31. Residues 41–47 (LLVQQWA) constitute a propeptide that is removed on maturation. The residue at position 48 (Q48) is a Pyrrolidone carboxylic acid. A propeptide spanning residues 61 to 67 (LTVQQWA) is cleaved from the precursor. Q68 carries the post-translational modification Pyrrolidone carboxylic acid. A propeptide spanning residues 78-84 (LTVQQWA) is cleaved from the precursor. Residues 81–110 (QQWAQGRPPGPPIPPLTVQQWAQARPPHPP) form a disordered region. Q85 carries the pyrrolidone carboxylic acid modification. Positions 96–102 (LTVQQWA) are excised as a propeptide. At Q103 the chain carries Pyrrolidone carboxylic acid. Residues 114–116 (APL) constitute a propeptide that is removed on maturation. Position 117 is a pyrrolidone carboxylic acid (Q117). V122 is a propeptide. Position 123 is a pyrrolidone carboxylic acid (Q123). Residues 128–144 (VQKWAPVQKWAPLLQPT) constitute a propeptide that is removed on maturation.

It in the N-terminal section; belongs to the bradykinin-potentiating peptide family. As to expression, expressed by venom gland.

Its subcellular location is the secreted. The protein localises to the cytoplasm. It localises to the cytosol. Its function is as follows. Peptide with several activities. It inhibits the activity of the angiotensin-converting enzyme (ACE) by a preferential interaction with its C-domain. It evokes transient hypotension (-14 mmHg) similar to that evoked by 0.5 ug of bradykinin, when injected alone into rats. It has a high bradykinin-potentiating effect (120%), when 60 nmol of BPP-10c are coinjected with 0.5 ug of bradykinin into rats. Does not affect angiotensin-1 pressor effects. Shows potent and long-lasting antihypertensive activity as well as a reduction of the heart rate. It also binds and dose-dependently promotes the activation of cytosolic argininosuccinate synthase (ASS1), an enzyme that catalyzes the conversion of citrulline, L-aspartate and ATP to argininosuccinate, AMP and pyrophosphate. It also enhances ASS1-dependent arginine production in HEK 293 cells, as well as in spontaneous hypertensive rat (SHR) and Wistar rat plasma. In addition, it induces the production of nitric-oxide (NO) by HUVEC cells via the endothelial nitric-oxide synthase (NOS3), which use arginine as a substrate and produce NO. It has been shown to be internalized by ASS1-expressing endothelial (HUVEC) and kidney (HEK 293) cells, and is detected homogenously distributed within the cell cytoplasm for up to 2 hours. In terms of biological role, acts as indirect hypotensive agent. Increases leukocyte rolling flux and adhesion by five-fold in post-capillary venules, without any increments in vasodilation of arterioles. Functionally, acts as indirect hypotensive agent. Potently induces vasodilation of arterioles, with only a small increase in leukocyte rolling flux. This Bothrops jararacussu (Jararacussu) protein is Bradykinin-potentiating and C-type natriuretic peptides isoform 2.